The following is a 557-amino-acid chain: Phosphoacetylglucosamine mutase (557 aa).

Serine 67 serves as the catalytic Phosphoserine intermediate. Mg(2+) contacts are provided by serine 67, aspartate 298, aspartate 300, and aspartate 302. The residue at position 67 (serine 67) is a Phosphoserine. Substrate-binding positions include 395-397 (EAN), 522-526 (RASGT), and arginine 531.

This sequence belongs to the phosphohexose mutase family. Mg(2+) serves as cofactor.

It localises to the cytoplasm. Its subcellular location is the nucleus. The catalysed reaction is N-acetyl-alpha-D-glucosamine 1-phosphate = N-acetyl-D-glucosamine 6-phosphate. Its pathway is nucleotide-sugar biosynthesis; UDP-N-acetyl-alpha-D-glucosamine biosynthesis; N-acetyl-alpha-D-glucosamine 1-phosphate from alpha-D-glucosamine 6-phosphate (route I): step 2/2. In terms of biological role, catalyzes the conversion of GlcNAc-6-P into GlcNAc-1-P during the synthesis of uridine diphosphate/UDP-GlcNAc, which is a biosynthetic precursor of chitin and also supplies the amino sugars for N-linked oligosaccharides of glycoproteins. Also has phosphoglucomutase activity. The protein is Phosphoacetylglucosamine mutase of Saccharomyces cerevisiae (strain ATCC 204508 / S288c) (Baker's yeast).